A 382-amino-acid polypeptide reads, in one-letter code: S-adenosylmethionine synthase (382 aa).

His16 provides a ligand contact to ATP. A Mg(2+)-binding site is contributed by Asp18. Position 44 (Glu44) interacts with K(+). L-methionine is bound by residues Glu57 and Gln100. Positions 100-110 are flexible loop; that stretch reads QSADIAMGVDE. ATP is bound by residues 165–167, Asp240, 246–247, Ala263, and Lys267; these read DAK and RK. Asp240 serves as a coordination point for L-methionine. Position 271 (Lys271) interacts with L-methionine.

Belongs to the AdoMet synthase family. As to quaternary structure, homotetramer; dimer of dimers. It depends on Mg(2+) as a cofactor. K(+) is required as a cofactor.

The protein resides in the cytoplasm. It carries out the reaction L-methionine + ATP + H2O = S-adenosyl-L-methionine + phosphate + diphosphate. It functions in the pathway amino-acid biosynthesis; S-adenosyl-L-methionine biosynthesis; S-adenosyl-L-methionine from L-methionine: step 1/1. In terms of biological role, catalyzes the formation of S-adenosylmethionine (AdoMet) from methionine and ATP. The overall synthetic reaction is composed of two sequential steps, AdoMet formation and the subsequent tripolyphosphate hydrolysis which occurs prior to release of AdoMet from the enzyme. This Saccharophagus degradans (strain 2-40 / ATCC 43961 / DSM 17024) protein is S-adenosylmethionine synthase.